A 383-amino-acid polypeptide reads, in one-letter code: MQRTPAMRVLVPALLVAISALSGCGKSEAPPPAQTPEVGIVTLEAQTVTLNTELPGRTNAFRIAEVRPQVNGIILKRLFKEGSDVKAGQQLYQIDPATYEADYQSAQANLASTQEQAQRYKLLVADQAVSKQQYADANAAYLQSKAAVEQARINLRYTKVLSPISGRIGRSAVTEGALVTNGQANAMATVQQLDPIYVDVTQPSTALLRLRRELASGQLERAGDNAAKVSLKLEDGSQYPLEGRLEFSEVSVDEGTGSVTIRAVFPNPNNELLPGMFVHAQLQEGVKQKAILAPQQGVTRDLKGQATALVVNAQNKVELRVIKADRVIGDKWLVTEGLNAGDKIITEGLQFVQPGVEVKTVPAKNVASAQKADAAPAKTDSKG.

An N-terminal signal peptide occupies residues 1–23; that stretch reads MQRTPAMRVLVPALLVAISALSG. Cys-24 carries the N-palmitoyl cysteine lipid modification. Cys-24 carries S-diacylglycerol cysteine lipidation. Positions 97–151 form a coiled coil; sequence ATYEADYQSAQANLASTQEQAQRYKLLVADQAVSKQQYADANAAYLQSKAAVEQA.

It belongs to the membrane fusion protein (MFP) (TC 8.A.1) family. Component of the MexAB-OprM multidrug efflux complex, composed of six MexA subunits forming a hexameric tube, binding to a MexB trimer, which interact with the trimeric OprM outer membrane channel protein. OprM is thought to not directly contact MexB; instead, MexA joins MexB and OprM by forming a funnel-like hexamer anchored to the inner membrane. MexA may initially form a hexameric ring complex with MexB prior to OprM, then OprM undergoes a conformational change as it contacts MexA, allowing the periplasmic gate to open. It is thought that, under high intracellular substrate concentration, MexB ejects substrate into the tunnel formed by MexA-OprM; as the substrate level declines, conformational changes in MexB cause efflux to reduce and stop and the complex shifts to the closed state. MexB subunit acts as a substrate:proton antiporter and activity is enhanced significantly when in complex with MexA and OprM, in vitro.

The protein localises to the cell inner membrane. Export of antibiotics and solvents is dramatically decreased in the presence of the protonophore carbonyl cyanide m-chlorophenylhydrazone (CCCP), therefore may be driven by a proton gradient. Antibiotic efflux is inhibited by pyridopyrimidine derivatives, such as ABI-PP, acting by binding to a hydrophobic pocket in MexB. The periplasmic linker component of the MexAB-OprM efflux system that confers multidrug resistance. Functions as the major efflux pump for n-hexane and p-xylene efflux. Has been shown in one study to be involved in the active efflux of the autoinducer N-(3-oxododecanoyl) homoserine lactone, thereby playing an indirect role in quorum-sensing; but has been shown in another study not to be involved in efflux of this autoinducer. Over-expression of the pump increases antibiotic and solvent efflux capacities. Implicated in the secretion of the siderophore pyoverdine. This chain is Multidrug resistance protein MexA (mexA), found in Pseudomonas aeruginosa (strain ATCC 15692 / DSM 22644 / CIP 104116 / JCM 14847 / LMG 12228 / 1C / PRS 101 / PAO1).